A 634-amino-acid chain; its full sequence is DNA-directed RNA polymerase subunit gamma (634 aa).

Zn(2+) is bound by residues Cys74, Cys76, Cys89, and Cys92. Mg(2+) contacts are provided by Asp471, Asp473, and Asp475.

This sequence belongs to the RNA polymerase beta' chain family. RpoC1 subfamily. In terms of assembly, in cyanobacteria the RNAP catalytic core is composed of 2 alpha, 1 beta, 1 beta', 1 gamma and 1 omega subunit. When a sigma factor is associated with the core the holoenzyme is formed, which can initiate transcription. It depends on Mg(2+) as a cofactor. Requires Zn(2+) as cofactor.

It carries out the reaction RNA(n) + a ribonucleoside 5'-triphosphate = RNA(n+1) + diphosphate. Functionally, DNA-dependent RNA polymerase catalyzes the transcription of DNA into RNA using the four ribonucleoside triphosphates as substrates. The sequence is that of DNA-directed RNA polymerase subunit gamma from Prochlorococcus marinus (strain AS9601).